We begin with the raw amino-acid sequence, 257 residues long: Imidazole glycerol phosphate synthase subunit HisF (257 aa).

Active-site residues include Asp12 and Asp131.

It belongs to the HisA/HisF family. As to quaternary structure, heterodimer of HisH and HisF.

Its subcellular location is the cytoplasm. The enzyme catalyses 5-[(5-phospho-1-deoxy-D-ribulos-1-ylimino)methylamino]-1-(5-phospho-beta-D-ribosyl)imidazole-4-carboxamide + L-glutamine = D-erythro-1-(imidazol-4-yl)glycerol 3-phosphate + 5-amino-1-(5-phospho-beta-D-ribosyl)imidazole-4-carboxamide + L-glutamate + H(+). Its pathway is amino-acid biosynthesis; L-histidine biosynthesis; L-histidine from 5-phospho-alpha-D-ribose 1-diphosphate: step 5/9. Functionally, IGPS catalyzes the conversion of PRFAR and glutamine to IGP, AICAR and glutamate. The HisF subunit catalyzes the cyclization activity that produces IGP and AICAR from PRFAR using the ammonia provided by the HisH subunit. In Hydrogenovibrio crunogenus (strain DSM 25203 / XCL-2) (Thiomicrospira crunogena), this protein is Imidazole glycerol phosphate synthase subunit HisF.